The primary structure comprises 406 residues: Probable G-protein coupled receptor tkr-1 (406 aa).

The Extracellular segment spans residues 1 to 47 (MNQEFLIQLGERACKNAENLTLPAELEGIFFCAPSSRESLATQVFVA). Residues 48 to 68 (IAFVLLMATAIIGNSVVMWII) form a helical membrane-spanning segment. Residues 69–76 (YQHKVMHY) are Cytoplasmic-facing. Residues 77–97 (GFNYFLFNMAFADLLIALFNV) traverse the membrane as a helical segment. Residues 98–115 (GTSWTYNLYYDWWYGDLC) lie on the Extracellular side of the membrane. A helical membrane pass occupies residues 116 to 136 (TLTSFFGIAPTTVSVCSMMAL). Topologically, residues 137 to 158 (SWDRCQAVVNPLQKRPLSRKRS) are cytoplasmic. The chain crosses the membrane as a helical span at residues 159–179 (VIAILIIWVVSTVTALPFAIA). At 180–204 (ASVNSLYTYDVVTSTVSKAHVCSAP) the chain is on the extracellular side. Residues 205–225 (VNTFFEKVLFGIQYALPIIIL) traverse the membrane as a helical segment. At 226–261 (GSTFTRIAVAFRATNEATDSSLKNNHTRAKSKAVKM) the chain is on the cytoplasmic side. The helical transmembrane segment at 262-282 (LFLMVVAFVVCWLPYHIYHAF) threads the bilayer. The Extracellular portion of the chain corresponds to 283 to 297 (ALEEFFDAARGKYAY). Residues 298 to 318 (LLIYWIAMSSCAYNPIIYCFA) form a helical membrane-spanning segment. The Cytoplasmic segment spans residues 319–406 (NERFRIGFRY…KVHLLSCHER (88 aa)).

The protein belongs to the G-protein coupled receptor 1 family.

The protein localises to the cell membrane. In terms of biological role, not known. Putative receptor. The polypeptide is Probable G-protein coupled receptor tkr-1 (tkr-1) (Caenorhabditis elegans).